Reading from the N-terminus, the 200-residue chain is Large ribosomal subunit protein uL4 (200 aa).

The segment at Arg-43–Asp-71 is disordered.

The protein belongs to the universal ribosomal protein uL4 family. Part of the 50S ribosomal subunit.

Functionally, one of the primary rRNA binding proteins, this protein initially binds near the 5'-end of the 23S rRNA. It is important during the early stages of 50S assembly. It makes multiple contacts with different domains of the 23S rRNA in the assembled 50S subunit and ribosome. In terms of biological role, forms part of the polypeptide exit tunnel. The protein is Large ribosomal subunit protein uL4 of Aggregatibacter actinomycetemcomitans (Actinobacillus actinomycetemcomitans).